A 74-amino-acid polypeptide reads, in one-letter code: Arabinogalactan protein 20 (74 aa).

The first 26 residues, 1–26, serve as a signal peptide directing secretion; it reads MASRNSVAVIALFAFVFAVISPFAGA. Residue Gln-27 is modified to Pyrrolidone carboxylic acid. 3 positions are modified to 4-hydroxyproline: Pro-31, Pro-33, and Pro-35. Pro-31, Pro-33, and Pro-35 each carry an O-linked (Ara...) hydroxyproline glycan. Ser-37 is lipidated: GPI-anchor amidated serine. A propeptide spans 38 to 74 (removed in mature form); sequence DGTSIDQGIAYLLMVVALVLTYLIHPLDASSSSYTFF.

The protein belongs to the AG-peptide AGP family. In terms of processing, contains 4-hydroxyproline; hydroxylated on Pro-31, Pro-33 and Pro-35. Post-translationally, O-glycosylated on hydroxyprolines; noncontiguous hydroxylproline residues are glycosylated with arabinogalactan.

It is found in the cell membrane. Its function is as follows. Proteoglycan that seems to be implicated in diverse developmental roles such as differentiation, cell-cell recognition, embryogenesis and programmed cell death. This Arabidopsis thaliana (Mouse-ear cress) protein is Arabinogalactan protein 20.